A 288-amino-acid chain; its full sequence is 33 kDa chaperonin (288 aa).

2 disulfides stabilise this stretch: cysteine 225–cysteine 227 and cysteine 258–cysteine 261.

The protein belongs to the HSP33 family. Under oxidizing conditions two disulfide bonds are formed involving the reactive cysteines. Under reducing conditions zinc is bound to the reactive cysteines and the protein is inactive.

The protein localises to the cytoplasm. Redox regulated molecular chaperone. Protects both thermally unfolding and oxidatively damaged proteins from irreversible aggregation. Plays an important role in the bacterial defense system toward oxidative stress. This Shewanella denitrificans (strain OS217 / ATCC BAA-1090 / DSM 15013) protein is 33 kDa chaperonin.